We begin with the raw amino-acid sequence, 159 residues long: Cytochrome c-type biogenesis protein CcmE (159 aa).

The Cytoplasmic segment spans residues 1-8; that stretch reads MNPRRKTR. A helical; Signal-anchor for type II membrane protein transmembrane segment spans residues 9-29; it reads LWVALTVLAGLGLTMALVLYA. At 30-159 the chain is on the periplasmic side; the sequence is LRANIDLFYT…PPQAYKDNRP (130 aa). Heme-binding residues include His130 and Tyr134. Positions 130–159 are disordered; that stretch reads HDENYTPPEVKAAMDANHTRPPQAYKDNRP.

This sequence belongs to the CcmE/CycJ family.

It is found in the cell inner membrane. Functionally, heme chaperone required for the biogenesis of c-type cytochromes. Transiently binds heme delivered by CcmC and transfers the heme to apo-cytochromes in a process facilitated by CcmF and CcmH. The sequence is that of Cytochrome c-type biogenesis protein CcmE from Cronobacter sakazakii (strain ATCC BAA-894) (Enterobacter sakazakii).